A 118-amino-acid chain; its full sequence is UPF0329 protein ECU03_0030/ECU05_0040/ECU06_0010/ECU06_1710/ECU11_0010 (118 aa).

The protein belongs to the UPF0329 family.

The protein is UPF0329 protein ECU03_0030/ECU05_0040/ECU06_0010/ECU06_1710/ECU11_0010 of Encephalitozoon cuniculi (strain GB-M1) (Microsporidian parasite).